Reading from the N-terminus, the 628-residue chain is Eukaryotic peptide chain release factor GTP-binding subunit ERF3B (628 aa).

Low complexity predominate over residues 1-10 (MDSGSSSSDS). Disordered stretches follow at residues 1–44 (MDSG…REPL), 71–124 (SFLR…LEGS), and 146–191 (LEES…KSKS). One can recognise a tr-type G domain in the interval 201 to 425 (KEHVNVVFIG…YLDNLPNFNR (225 aa)). A G1 region spans residues 210–217 (GHVDAGKS). 213–218 (DAGKST) contacts GTP. Positions 266–270 (GKTVE) are G2. The segment at 287–290 (DAPG) is G3. Residues 349–352 (NKMD) and 391–393 (SGL) contribute to the GTP site. Residues 349-352 (NKMD) form a G4 region. The tract at residues 391–393 (SGL) is G5.

It belongs to the TRAFAC class translation factor GTPase superfamily. Classic translation factor GTPase family. ERF3 subfamily. As to quaternary structure, component of the eRF1-eRF3-GTP ternary complex, composed of ETF1/ERF1 and ERF3 (GSPT1/ERF3A or GSPT2/ERF3B) and GTP. Component of the transient SURF (SMG1-UPF1-eRF1-eRF3) complex. Interacts with UPF1 and PABPC1.

The protein localises to the cytoplasm. The catalysed reaction is GTP + H2O = GDP + phosphate + H(+). Its function is as follows. GTPase component of the eRF1-eRF3-GTP ternary complex, a ternary complex that mediates translation termination in response to the termination codons UAA, UAG and UGA. GSPT2/ERF3B mediates ETF1/ERF1 delivery to stop codons: The eRF1-eRF3-GTP complex binds to a stop codon in the ribosomal A-site. GTP hydrolysis by GSPT2/ERF3B induces a conformational change that leads to its dissociation, permitting ETF1/ERF1 to accommodate fully in the A-site. Component of the transient SURF complex which recruits UPF1 to stalled ribosomes in the context of nonsense-mediated decay (NMD) of mRNAs containing premature stop codons. This is Eukaryotic peptide chain release factor GTP-binding subunit ERF3B (GSPT2) from Pongo abelii (Sumatran orangutan).